A 95-amino-acid polypeptide reads, in one-letter code: Osteocalcin-related protein (95 aa).

A signal peptide spans 1–23; that stretch reads MRTLSLLTLLALAALCLSDLTDA. A propeptide spanning residues 24 to 49 is cleaved from the precursor; the sequence is TPTGPESDKAFMSKQEGNKVVNRLRR. Residues 46–92 enclose the Gla domain; that stretch reads RLRRYLGASVPSPDPLEPTRELCELDPACDELSNQYGLKTAYRRIYG. E62, E66, E69, and D75 together coordinate Ca(2+). A 4-carboxyglutamate mark is found at E66 and E69. A disulfide bridge links C68 with C74.

It belongs to the osteocalcin/matrix Gla protein family. Post-translationally, gamma-carboxyglutamic acid residues are formed by vitamin K dependent carboxylation. These residues are essential for the binding of calcium. In terms of tissue distribution, expressed in kidney and lung, but not in bone.

The protein resides in the secreted. Binds strongly to apatite and calcium. The polypeptide is Osteocalcin-related protein (Mus musculus (Mouse)).